We begin with the raw amino-acid sequence, 364 residues long: Popeye domain-containing protein 2 (364 aa).

Asn4 is a glycosylation site (N-linked (GlcNAc...) asparagine). 2 helical membrane passes run 37-57 and 77-97; these read LLLGFMGGSGVYGCFYLFGFL and IVLWSFLLAVVCLLQLAHLVY. The disordered stretch occupies residues 276 to 333; the sequence is ADAGPESEKGDEEVCEPAVSPPQATPTSLQQTPPCSTPPATTNFPAPPTRARLSRPDS. Over residues 300 to 309 the composition is skewed to polar residues; sequence TPTSLQQTPP. Phosphothreonine is present on Thr361.

This sequence belongs to the popeye family. In terms of tissue distribution, expressed predominantly in the heart and in the skeletal muscle.

It is found in the membrane. Its subcellular location is the cell membrane. The protein resides in the sarcolemma. Important for the maintenance of cardiac function. Plays a regulatory function in heart rate dynamics mediated, at least in part, through cAMP-binding and, probably, by increasing cell surface expression of the potassium channel KCNK2 and enhancing current density. This Homo sapiens (Human) protein is Popeye domain-containing protein 2 (POPDC2).